Reading from the N-terminus, the 157-residue chain is 2-C-methyl-D-erythritol 2,4-cyclodiphosphate synthase (157 aa).

Residues aspartate 8 and histidine 10 each coordinate a divalent metal cation. 4-CDP-2-C-methyl-D-erythritol 2-phosphate-binding positions include 8–10 and 34–35; these read DVH and HS. Histidine 42 provides a ligand contact to a divalent metal cation. 4-CDP-2-C-methyl-D-erythritol 2-phosphate contacts are provided by residues 56 to 58, 61 to 65, 132 to 135, phenylalanine 139, and arginine 142; these read DIG, FPDTD, and TTTE.

The protein belongs to the IspF family. Homotrimer. A divalent metal cation is required as a cofactor.

The catalysed reaction is 4-CDP-2-C-methyl-D-erythritol 2-phosphate = 2-C-methyl-D-erythritol 2,4-cyclic diphosphate + CMP. Its pathway is isoprenoid biosynthesis; isopentenyl diphosphate biosynthesis via DXP pathway; isopentenyl diphosphate from 1-deoxy-D-xylulose 5-phosphate: step 4/6. In terms of biological role, involved in the biosynthesis of isopentenyl diphosphate (IPP) and dimethylallyl diphosphate (DMAPP), two major building blocks of isoprenoid compounds. Catalyzes the conversion of 4-diphosphocytidyl-2-C-methyl-D-erythritol 2-phosphate (CDP-ME2P) to 2-C-methyl-D-erythritol 2,4-cyclodiphosphate (ME-CPP) with a corresponding release of cytidine 5-monophosphate (CMP). This Pseudomonas putida (strain W619) protein is 2-C-methyl-D-erythritol 2,4-cyclodiphosphate synthase.